Reading from the N-terminus, the 131-residue chain is Sec-independent protein translocase protein TatB (131 aa).

A helical membrane pass occupies residues 2-22 (FDGIGFMELLLIGVLGLVVLG). The segment at 69–131 (NQGLKNLAPE…ENAKSDKPNG (63 aa)) is disordered. The segment covering 105 to 123 (AKETPAKETATTETTSTEN) has biased composition (low complexity).

Belongs to the TatB family. In terms of assembly, the Tat system comprises two distinct complexes: a TatABC complex, containing multiple copies of TatA, TatB and TatC subunits, and a separate TatA complex, containing only TatA subunits. Substrates initially bind to the TatABC complex, which probably triggers association of the separate TatA complex to form the active translocon.

Its subcellular location is the cell inner membrane. In terms of biological role, part of the twin-arginine translocation (Tat) system that transports large folded proteins containing a characteristic twin-arginine motif in their signal peptide across membranes. Together with TatC, TatB is part of a receptor directly interacting with Tat signal peptides. TatB may form an oligomeric binding site that transiently accommodates folded Tat precursor proteins before their translocation. In Shewanella piezotolerans (strain WP3 / JCM 13877), this protein is Sec-independent protein translocase protein TatB.